The sequence spans 221 residues: Octanoyltransferase (221 aa).

The BPL/LPL catalytic domain maps to 31–216; the sequence is GQIGDTLLLL…SLCAIFDLRP (186 aa). Residues 76–83, 145–147, and 159–161 contribute to the substrate site; these read RGGEVTYH, AIG, and GLA. Residue Cys-177 is the Acyl-thioester intermediate of the active site.

Belongs to the LipB family.

It is found in the cytoplasm. It carries out the reaction octanoyl-[ACP] + L-lysyl-[protein] = N(6)-octanoyl-L-lysyl-[protein] + holo-[ACP] + H(+). It participates in protein modification; protein lipoylation via endogenous pathway; protein N(6)-(lipoyl)lysine from octanoyl-[acyl-carrier-protein]: step 1/2. Functionally, catalyzes the transfer of endogenously produced octanoic acid from octanoyl-acyl-carrier-protein onto the lipoyl domains of lipoate-dependent enzymes. Lipoyl-ACP can also act as a substrate although octanoyl-ACP is likely to be the physiological substrate. The sequence is that of Octanoyltransferase from Chloroflexus aggregans (strain MD-66 / DSM 9485).